A 144-amino-acid polypeptide reads, in one-letter code: Catabolic 3-dehydroquinase 1 (144 aa).

The Proton acceptor role is filled by Tyr-24. The substrate site is built by Asn-75, His-81, and Asp-88. His-101 (proton donor) is an active-site residue. Substrate contacts are provided by residues 102 to 103 (IS) and Arg-112.

The protein belongs to the type-II 3-dehydroquinase family. In terms of assembly, homododecamer. Adopts a ring-like structure, composed of an arrangement of two hexameric rings stacked on top of one another.

It carries out the reaction 3-dehydroquinate = 3-dehydroshikimate + H2O. The protein operates within aromatic compound metabolism; 3,4-dihydroxybenzoate biosynthesis; 3,4-dihydroxybenzoate from 3-dehydroquinate: step 1/2. In terms of biological role, is involved in the catabolism of quinate. Allows the utilization of quinate as carbon source via the beta-ketoadipate pathway. This Fusarium vanettenii (strain ATCC MYA-4622 / CBS 123669 / FGSC 9596 / NRRL 45880 / 77-13-4) (Fusarium solani subsp. pisi) protein is Catabolic 3-dehydroquinase 1.